Here is a 256-residue protein sequence, read N- to C-terminus: Isoprenyl transferase 1 (256 aa).

Asp-34 is an active-site residue. Asp-34 contacts Mg(2+). Substrate-binding positions include 35–38 (GNRR), Trp-39, His-52, and 80–82 (STE). The Proton acceptor role is filled by Asn-83. Substrate is bound by residues Arg-86, Arg-205, and 211–213 (RLS). Glu-224 lines the Mg(2+) pocket.

The protein belongs to the UPP synthase family. As to quaternary structure, homodimer. The cofactor is Mg(2+).

Catalyzes the condensation of isopentenyl diphosphate (IPP) with allylic pyrophosphates generating different type of terpenoids. The protein is Isoprenyl transferase 1 of Corynebacterium efficiens (strain DSM 44549 / YS-314 / AJ 12310 / JCM 11189 / NBRC 100395).